The chain runs to 160 residues: D-aminoacyl-tRNA deacylase (160 aa).

Positions 146 to 147 match the Gly-cisPro motif, important for rejection of L-amino acids motif; the sequence is GP.

It belongs to the DTD family. In terms of assembly, homodimer.

The protein localises to the cytoplasm. It catalyses the reaction glycyl-tRNA(Ala) + H2O = tRNA(Ala) + glycine + H(+). The catalysed reaction is a D-aminoacyl-tRNA + H2O = a tRNA + a D-alpha-amino acid + H(+). In terms of biological role, an aminoacyl-tRNA editing enzyme that deacylates mischarged D-aminoacyl-tRNAs. Also deacylates mischarged glycyl-tRNA(Ala), protecting cells against glycine mischarging by AlaRS. Acts via tRNA-based rather than protein-based catalysis; rejects L-amino acids rather than detecting D-amino acids in the active site. By recycling D-aminoacyl-tRNA to D-amino acids and free tRNA molecules, this enzyme counteracts the toxicity associated with the formation of D-aminoacyl-tRNA entities in vivo and helps enforce protein L-homochirality. The chain is D-aminoacyl-tRNA deacylase from Desulfovibrio desulfuricans (strain ATCC 27774 / DSM 6949 / MB).